The following is a 269-amino-acid chain: Triosephosphate isomerase (269 aa).

Substrate is bound at residue 8–10 (NWK). The active-site Electrophile is histidine 105. Glutamate 183 functions as the Proton acceptor in the catalytic mechanism. Substrate contacts are provided by residues glycine 189, serine 227, and 248–249 (GG).

It belongs to the triosephosphate isomerase family. As to quaternary structure, homodimer.

The protein localises to the cytoplasm. The enzyme catalyses D-glyceraldehyde 3-phosphate = dihydroxyacetone phosphate. Its pathway is carbohydrate biosynthesis; gluconeogenesis. It participates in carbohydrate degradation; glycolysis; D-glyceraldehyde 3-phosphate from glycerone phosphate: step 1/1. In terms of biological role, involved in the gluconeogenesis. Catalyzes stereospecifically the conversion of dihydroxyacetone phosphate (DHAP) to D-glyceraldehyde-3-phosphate (G3P). The protein is Triosephosphate isomerase of Psychrobacter cryohalolentis (strain ATCC BAA-1226 / DSM 17306 / VKM B-2378 / K5).